The chain runs to 1125 residues: Probable phospholipid-transporting ATPase IIB (1125 aa).

The Cytoplasmic segment spans residues 1–131; the sequence is MADGIPLNPV…IKNQKYNIVT (131 aa). A helical transmembrane segment spans residues 132–152; sequence FVPGVLYQQFKFFLNLYFLVV. Over 153 to 161 the chain is Extracellular; sequence ACSQFVPSL. The helical transmembrane segment at 162-182 threads the bilayer; sequence KIGYLYTYWAPLGFVLAVTMV. Residues 183–369 lie on the Cytoplasmic side of the membrane; it reads REAVDEVRRC…LDLELNRLTK (187 aa). The helical transmembrane segment at 370–390 threads the bilayer; the sequence is ALFLAQVVLSVVMVALQGFLG. At 391-395 the chain is on the extracellular side; that stretch reads PWFRN. Residues 396 to 415 form a helical membrane-spanning segment; sequence LFRFVVLFSYIIPISLRVNL. The Cytoplasmic portion of the chain corresponds to 416–928; it reads DMGKSAYGWM…ALGQFVMHRG (513 aa). Aspartate 455 (4-aspartylphosphate intermediate) is an active-site residue. ATP is bound by residues aspartate 455, lysine 456, and threonine 457. Aspartate 455 contributes to the Mg(2+) binding site. Mg(2+) is bound at residue threonine 457. Over residues 500-511 the composition is skewed to low complexity; that stretch reads QSNGSSASSTPS. 2 disordered regions span residues 500-525 and 552-574; these read QSNG…RKSV and GANA…RTYQ. Positions 558 to 567 are enriched in acidic residues; the sequence is ESTEADQDFS. The ATP site is built by glutamate 580, phenylalanine 622, lysine 627, lysine 646, arginine 675, threonine 676, threonine 755, glycine 756, aspartate 757, arginine 837, and lysine 843. Mg(2+) is bound at residue aspartate 863. ATP is bound by residues asparagine 866 and aspartate 867. Aspartate 867 is a binding site for Mg(2+). A helical transmembrane segment spans residues 929–949; sequence MIISTMQAVFSSIFYFASVPL. The Extracellular portion of the chain corresponds to 950 to 951; the sequence is YQ. The helical transmembrane segment at 952–972 threads the bilayer; that stretch reads GFLMVGYATIYTMFPVFSLVL. At 973–1001 the chain is on the cytoplasmic side; that stretch reads DQDVKPEMALLYPELYKDLTKGRSLSFKT. The helical transmembrane segment at 1002 to 1022 threads the bilayer; it reads FLIWVLISIYQGGILMYGALV. Residues 1023–1030 lie on the Extracellular side of the membrane; the sequence is LFDQEFVH. The helical transmembrane segment at 1031–1051 threads the bilayer; the sequence is VVAISFTALILTELLMVALTI. Over 1052-1055 the chain is Cytoplasmic; it reads RTWH. The chain crosses the membrane as a helical span at residues 1056–1076; it reads WLMVVAQLISLACYLASLAFL. At 1077-1088 the chain is on the extracellular side; sequence NEYFDLSFITTR. Residues 1089-1109 traverse the membrane as a helical segment; it reads VFLWKVCVITLVSCLPLYIIK. Over 1110 to 1125 the chain is Cytoplasmic; sequence YLKRKFSPPSYSKLSS.

It belongs to the cation transport ATPase (P-type) (TC 3.A.3) family. Type IV subfamily. Mg(2+) is required as a cofactor.

It localises to the golgi apparatus. Its subcellular location is the trans-Golgi network membrane. The catalysed reaction is ATP + H2O + phospholipidSide 1 = ADP + phosphate + phospholipidSide 2.. This is Probable phospholipid-transporting ATPase IIB (atp9b) from Danio rerio (Zebrafish).